A 264-amino-acid chain; its full sequence is Putative hydro-lyase RBAM_004300 (264 aa).

The protein belongs to the D-glutamate cyclase family.

This chain is Putative hydro-lyase RBAM_004300, found in Bacillus velezensis (strain DSM 23117 / BGSC 10A6 / LMG 26770 / FZB42) (Bacillus amyloliquefaciens subsp. plantarum).